Consider the following 1317-residue polypeptide: WASH complex subunit 2 (1317 aa).

Residues 1–219 (MNRTSPDSER…VGSDRGSIVD (219 aa)) form a sufficient for interaction with WASHC3, WASHC4 and WASHC5; required for interaction with WASHC1 region. 5 positions are modified to phosphoserine: S157, S159, S204, S205, and S209. A compositionally biased stretch (low complexity) spans 201–213 (GELSSEEGSVGSD). The segment at 201 to 630 (GELSSEEGSV…RKSKGELWDS (430 aa)) is disordered. 2 stretches are compositionally biased toward acidic residues: residues 219–232 (DSEE…SDED) and 250–274 (DEEE…EDIE). S284 bears the Phosphoserine mark. Basic and acidic residues-rich tracts occupy residues 289–325 (LAAR…RTPP) and 366–376 (DLFRETSRDRP). A Phosphothreonine modification is found at T323. A sufficient for interaction with CCDC93 region spans residues 348–582 (SRGGLFSGQG…QVSSQQPQSQ (235 aa)). The interval 349 to 1317 (RGGLFSGQGL…DDPLNAFGSQ (969 aa)) is interaction with VPS35. Positions 358 to 368 (LFDDEDESDLF) match the LFa 1 motif. The segment covering 379–399 (APVSEESSSPKPGKKIPAGAV) has biased composition (low complexity). Residues S385 and S387 each carry the phosphoserine modification. 2 short sequence motifs (LFa) span residues 433-445 (LFDD…DNFF) and 464-473 (IFDDEEGDLF). Over residues 500–518 (TLPSSKNPKLVSETKTQKG) the composition is skewed to polar residues. Short sequence motifs (LFa) lie at residues 519–530 (LFSDEEDSEDLF) and 554–565 (LFGDEDEEDNLF). 2 positions are modified to phosphoserine: S521 and S526. A compositionally biased stretch (low complexity) spans 529–548 (LFSSQNSSKSKSASLLSSQL). Over residues 569 to 582 (PAKKQVSSQQPQSQ) the composition is skewed to low complexity. The span at 583-592 (EKPKPSEQPK) shows a compositional bias: basic and acidic residues. The LFa 6 signature appears at 599 to 611 (LFSSDEEDQWNIT). A phosphoserine mark is found at S601 and S602. Residues 613–627 (SHTKLATDRKSKGEL) are compositionally biased toward basic and acidic residues. 2 consecutive short sequence motifs (LFa) follow at residues 646-657 (LFEEDDDEADLF) and 673-685 (LFED…SSLF). The interval 667–817 (TQRTSLLFED…GRPKSTGVFQ (151 aa)) is disordered. S710 carries the post-translational modification Phosphoserine. Residues 717-744 (VPSRVKSVDVKVGNGKEADVAKVTEKEG) show a composition bias toward basic and acidic residues. A phosphoserine mark is found at S763 and S778. Basic and acidic residues predominate over residues 788–810 (EDQSNTHVSKNDAEKGLKTDGRP). 2 consecutive short sequence motifs (LFa) follow at residues 815 to 823 (VFQDEELLF) and 832 to 838 (DPDVDLF). Position 853 is a phosphoserine (S853). Positions 854–864 (LFGDDEDYDLF) match the LFa 11 motif. Disordered regions lie at residues 867–926 (AKTQ…REPS) and 960–1079 (ELAF…AAPP). Residues 874–906 (PEKKGALKKDRPVSLKNEEAPESTEGSKEKSLW) show a composition bias toward basic and acidic residues. Residues 912–1317 (QDSSGLTPFK…DDPLNAFGSQ (406 aa)) are interaction with phospholipids. The segment covering 1003–1021 (NKSRVKVRGKRRPQTRAAR) has biased composition (basic residues). The tract at residues 1004–1022 (KSRVKVRGKRRPQTRAARR) is required for interaction with F-actin-capping protein subunit alpha (CAPZA1 or CAPZA2 or CAPZA3). Phosphoserine occurs at positions 1029, 1047, 1064, and 1092. The LFa 12 motif lies at 1107 to 1114 (LFDSGDIF). Residues 1119–1141 (GSQSMEGTKVKAAETPAHLSGGS) are disordered. 6 consecutive short sequence motifs (LFa) follow at residues 1147–1161 (VFPA…DDLF), 1177–1185 (LLEDEDDLF), 1210–1216 (IFEDDIF), 1238–1246 (LFDDNIDIF), 1266–1275 (VFDDDTDDIF), and 1306–1314 (IFDDPLNAF). A phosphoserine mark is found at S1152, S1155, and S1156. The tract at residues 1158–1183 (DDLFQTVKPRPAKKRNPFPLLEDEDD) is disordered. The tract at residues 1277–1317 (SGLQAKKSKPKSQSAEATSELRSDHKVSNIFDDPLNAFGSQ) is disordered. S1316 is subject to Phosphoserine.

This sequence belongs to the FAM21 family. Component of the WASH core complex also described as WASH regulatory complex SHRC composed of WASHC1, WASHC2, WASHC3, WASHC4 and WASHC5; in the complex interacts (via N-terminus) directly with WASHC1. The WASH core complex associates via WASHC2 with the F-actin-capping protein dimer (formed by CAPZA1, CAPZA2 or CAPZA3 and CAPZB) in a transient or substoichiometric manner which was initially described as WASH complex. Interacts with VPS35; mediates the association with the retromer CSC complex. Interacts with FKBP15. Interacts with CCDC93, CCDC22, C16orf62 homolog; indicative for an association of the WASH core complex with the CCC complex. Directly interacts with TBC1D23.

The protein resides in the early endosome membrane. The protein localises to the cell membrane. Acts as a component of the WASH core complex that functions as a nucleation-promoting factor (NPF) at the surface of endosomes, where it recruits and activates the Arp2/3 complex to induce actin polymerization, playing a key role in the fission of tubules that serve as transport intermediates during endosome sorting. Mediates the recruitment of the WASH core complex to endosome membranes via binding to phospholipids and VPS35 of the retromer CSC. Mediates the recruitment of the F-actin-capping protein dimer to the WASH core complex probably promoting localized F-actin polymerization needed for vesicle scission. Via its C-terminus binds various phospholipids, most strongly phosphatidylinositol 4-phosphate (PtdIns-(4)P), phosphatidylinositol 5-phosphate (PtdIns-(5)P) and phosphatidylinositol 3,5-bisphosphate (PtdIns-(3,5)P2). Involved in the endosome-to-plasma membrane trafficking and recycling of SNX27-retromer-dependent cargo proteins, such as GLUT1. Required for the association of DNAJC13, ENTR1, ANKRD50 with retromer CSC subunit VPS35. Required for the endosomal recruitment of CCC complex subunits COMMD1, CCDC93 and C16orf62 homolog. This is WASH complex subunit 2 from Cricetulus griseus (Chinese hamster).